Reading from the N-terminus, the 328-residue chain is Malate dehydrogenase (328 aa).

NAD(+) is bound at residue 12 to 18 (GAAGQIG). Substrate contacts are provided by Arg-95 and Arg-101. NAD(+)-binding positions include Asn-108, Gln-115, and 132–134 (VGN). Residues Asn-134 and Arg-165 each coordinate substrate. His-190 acts as the Proton acceptor in catalysis.

This sequence belongs to the LDH/MDH superfamily. MDH type 2 family.

It carries out the reaction (S)-malate + NAD(+) = oxaloacetate + NADH + H(+). Functionally, catalyzes the reversible oxidation of malate to oxaloacetate. The polypeptide is Malate dehydrogenase (Polaromonas sp. (strain JS666 / ATCC BAA-500)).